A 279-amino-acid chain; its full sequence is Tryptophan synthase alpha chain (279 aa).

Active-site proton acceptor residues include Glu50 and Asp61.

It belongs to the TrpA family. As to quaternary structure, tetramer of two alpha and two beta chains.

It carries out the reaction (1S,2R)-1-C-(indol-3-yl)glycerol 3-phosphate + L-serine = D-glyceraldehyde 3-phosphate + L-tryptophan + H2O. It functions in the pathway amino-acid biosynthesis; L-tryptophan biosynthesis; L-tryptophan from chorismate: step 5/5. The alpha subunit is responsible for the aldol cleavage of indoleglycerol phosphate to indole and glyceraldehyde 3-phosphate. The sequence is that of Tryptophan synthase alpha chain from Brucella ovis (strain ATCC 25840 / 63/290 / NCTC 10512).